Consider the following 192-residue polypeptide: dTTP/UTP pyrophosphatase (192 aa).

Asp-70 functions as the Proton acceptor in the catalytic mechanism.

The protein belongs to the Maf family. YhdE subfamily. The cofactor is a divalent metal cation.

The protein resides in the cytoplasm. The enzyme catalyses dTTP + H2O = dTMP + diphosphate + H(+). It carries out the reaction UTP + H2O = UMP + diphosphate + H(+). Nucleoside triphosphate pyrophosphatase that hydrolyzes dTTP and UTP. May have a dual role in cell division arrest and in preventing the incorporation of modified nucleotides into cellular nucleic acids. The chain is dTTP/UTP pyrophosphatase from Clostridium perfringens (strain ATCC 13124 / DSM 756 / JCM 1290 / NCIMB 6125 / NCTC 8237 / Type A).